We begin with the raw amino-acid sequence, 195 residues long: MVLCCFALLITAVLVASKGAEEKPTCDPDHENKKVLWTCWTDDYNTTCFERSFYYNRQTDRCEEFLYEGCGGNDNNFPSIEDCLSNCKTNMTDYEIKFFQRLNKTLSCTSTYEKGSISRYILNETSQECQRADVKNGDIHFPSFRKCVYDCKPNSTSNPYCNSIKENGTKPRAPWNCYRQDGYKALFCYKPKNSK.

Positions 1–20 (MVLCCFALLITAVLVASKGA) are cleaved as a signal peptide. Positions 26–87 (CDPDHENKKV…PSIEDCLSNC (62 aa)) constitute a BPTI/Kunitz inhibitor domain. Disulfide bonds link C26–C87, C39–C70, and C62–C83.

In terms of tissue distribution, primarily expressed in salivary glands and weakly expressed in the midgut of fed ticks.

It localises to the secreted. In terms of biological role, anticoagulant protein that inhibits the serine proteases trypsin and elastase, but not thrombin. The anticoagulant effect of this recombinant protein on blood clotting is found only in the activated partial thromboplastin time (APTT) assays, but not in the prothrombin time (PT) assays. The sequence is that of Anticoagulant protein rhipilin-2 from Rhipicephalus haemaphysaloides (Tick).